Here is a 128-residue protein sequence, read N- to C-terminus: Probable 4-amino-4-deoxy-L-arabinose-phosphoundecaprenol flippase subunit ArnF (128 aa).

The Cytoplasmic segment spans residues 1 to 2 (MG). Residues 3-23 (LMWGLFSVIIASVAQLSLGFA) form a helical membrane-spanning segment. At 24-35 (ASHLPPMTHLWD) the chain is on the periplasmic side. A helical membrane pass occupies residues 36–56 (FIAALLAFGLDARILLLGLLG). At 57-76 (YLLSVFCWYKTLHKLALSKA) the chain is on the cytoplasmic side. A helical membrane pass occupies residues 77-97 (YALLSMSYVLVWIASMVLPGW). Over 98-100 (EGT) the chain is Periplasmic. The chain crosses the membrane as a helical span at residues 101–121 (FSLKALLGVACIMSGLMLIFL). Residues 122–128 (PMTKQRY) lie on the Cytoplasmic side of the membrane.

It belongs to the ArnF family. Heterodimer of ArnE and ArnF.

The protein resides in the cell inner membrane. The protein operates within bacterial outer membrane biogenesis; lipopolysaccharide biosynthesis. Its function is as follows. Translocates 4-amino-4-deoxy-L-arabinose-phosphoundecaprenol (alpha-L-Ara4N-phosphoundecaprenol) from the cytoplasmic to the periplasmic side of the inner membrane. The sequence is that of Probable 4-amino-4-deoxy-L-arabinose-phosphoundecaprenol flippase subunit ArnF from Escherichia coli (strain 55989 / EAEC).